A 663-amino-acid chain; its full sequence is DNA ligase (663 aa).

NAD(+) contacts are provided by residues D31–D35, S80–L81, and E110. K112 acts as the N6-AMP-lysine intermediate in catalysis. Residues R133, E170, K285, and K309 each contribute to the NAD(+) site. Zn(2+) contacts are provided by C404, C407, C422, and C428. Residues F585–E663 enclose the BRCT domain.

It belongs to the NAD-dependent DNA ligase family. LigA subfamily. The cofactor is Mg(2+). It depends on Mn(2+) as a cofactor.

The catalysed reaction is NAD(+) + (deoxyribonucleotide)n-3'-hydroxyl + 5'-phospho-(deoxyribonucleotide)m = (deoxyribonucleotide)n+m + AMP + beta-nicotinamide D-nucleotide.. DNA ligase that catalyzes the formation of phosphodiester linkages between 5'-phosphoryl and 3'-hydroxyl groups in double-stranded DNA using NAD as a coenzyme and as the energy source for the reaction. It is essential for DNA replication and repair of damaged DNA. This Azobacteroides pseudotrichonymphae genomovar. CFP2 protein is DNA ligase.